A 591-amino-acid chain; its full sequence is Isocitrate dehydrogenase kinase/phosphatase (591 aa).

Residues 322–328 (APGIRGL) and Lys343 contribute to the ATP site. Asp378 is an active-site residue.

The protein belongs to the AceK family.

It localises to the cytoplasm. It catalyses the reaction L-seryl-[isocitrate dehydrogenase] + ATP = O-phospho-L-seryl-[isocitrate dehydrogenase] + ADP + H(+). Functionally, bifunctional enzyme which can phosphorylate or dephosphorylate isocitrate dehydrogenase (IDH) on a specific serine residue. This is a regulatory mechanism which enables bacteria to bypass the Krebs cycle via the glyoxylate shunt in response to the source of carbon. When bacteria are grown on glucose, IDH is fully active and unphosphorylated, but when grown on acetate or ethanol, the activity of IDH declines drastically concomitant with its phosphorylation. The sequence is that of Isocitrate dehydrogenase kinase/phosphatase from Aromatoleum aromaticum (strain DSM 19018 / LMG 30748 / EbN1) (Azoarcus sp. (strain EbN1)).